A 299-amino-acid chain; its full sequence is Palmitoyltransferase ZDHHC3 (299 aa).

The Cytoplasmic segment spans residues 1–47 (MMLIPTHHFRDIERKPEYLQPEKCAPPPFPGPVGTMWFIRDGCGIAC). Y18 carries the post-translational modification Phosphotyrosine. Residues 48–68 (AIVTWFLVLYAEFVVLFVMLI) traverse the membrane as a helical segment. Residues 69-72 (PSRD) are Lumenal-facing. The chain crosses the membrane as a helical span at residues 73–93 (YAYSIINGIVFNLLAFLALAS). Residues 94 to 171 (HCRAMLTDPG…NCVGENNQKY (78 aa)) lie on the Cytoplasmic side of the membrane. In terms of domain architecture, DHHC spans 128–254 (KCPKCCSIKP…DETGIEQLKK (127 aa)). C146 is lipidated: S-palmitoyl cysteine. Catalysis depends on C157, which acts as the S-palmitoyl cysteine intermediate. A helical transmembrane segment spans residues 172–192 (FVLFTMYIALISLHALIMVGF). The Lumenal portion of the chain corresponds to 193–214 (HFLHCFEEDWTKCSSFSPPTTV). A helical membrane pass occupies residues 215 to 235 (ILLILLCFEALLFLIFTSVMF). The Cytoplasmic portion of the chain corresponds to 236 to 299 (GTQVHSICTD…GKADPYQYVV (64 aa)).

This sequence belongs to the DHHC palmitoyltransferase family. As to quaternary structure, monomer. Homooligomers. The monomeric form has a higher catalytic activity. Forms heterooligomers with ZDHHC7. Interacts with TNFRSF10A. Post-translationally, phosphorylation by FGFR1 and SRC probably regulates the palmitoyltransferase activity. Autopalmitoylated.

The protein resides in the golgi apparatus membrane. The catalysed reaction is L-cysteinyl-[protein] + hexadecanoyl-CoA = S-hexadecanoyl-L-cysteinyl-[protein] + CoA. It carries out the reaction L-cysteinyl-[protein] + tetradecanoyl-CoA = S-tetradecanoyl-L-cysteinyl-[protein] + CoA. It catalyses the reaction L-cysteinyl-[protein] + octadecanoyl-CoA = S-octadecanoyl-L-cysteinyl-[protein] + CoA. Golgi-localized palmitoyltransferase that catalyzes the addition of palmitate onto various protein substrates. Has no stringent fatty acid selectivity and in addition to palmitate can also transfer onto target proteins myristate from tetradecanoyl-CoA and stearate from octadecanoyl-CoA. Plays an important role in G protein-coupled receptor signaling pathways involving GNAQ and potentially other heterotrimeric G proteins by regulating their dynamic association with the plasma membrane. Palmitoylates ITGA6 and ITGB4, thereby regulating the alpha-6/beta-4 integrin localization, expression and function in cell adhesion to laminin. Plays a role in the TRAIL-activated apoptotic signaling pathway most probably through the palmitoylation and localization to the plasma membrane of TNFRSF10A. In the brain, by palmitoylating the gamma subunit GABRG2 of GABA(A) receptors and regulating their postsynaptic accumulation, plays a role in synaptic GABAergic inhibitory function and GABAergic innervation. Palmitoylates the neuronal protein GAP43 which is also involved in the formation of GABAergic synapses. Palmitoylates NCDN thereby regulating its association with endosome membranes. Probably palmitoylates PRCD and is involved in its proper localization within the photoreceptor. Could mediate the palmitoylation of NCAM1 and regulate neurite outgrowth. Could palmitoylate DNAJC5 and regulate its localization to Golgi membranes. Also constitutively palmitoylates DLG4. May also palmitoylate SNAP25. Could palmitoylate the glutamate receptors GRIA1 and GRIA2 but this has not been confirmed in vivo. Could also palmitoylate the D(2) dopamine receptor DRD2. May also palmitoylate LAMTOR1, promoting its localization to lysosomal membranes. Palmitoylates the Toll-like receptor 9/TLR9 in the Golgi and thereby regulates TLR9 trafficking to endosomes. May palmitoylate CALHM1 and CALHM3 subunits of gustatory voltage-gated ion channels and modulate channel gating and kinetics. The chain is Palmitoyltransferase ZDHHC3 from Rattus norvegicus (Rat).